The chain runs to 77 residues: Small ribosomal subunit protein uS17 (77 aa).

This sequence belongs to the universal ribosomal protein uS17 family. In terms of assembly, part of the 30S ribosomal subunit.

Functionally, one of the primary rRNA binding proteins, it binds specifically to the 5'-end of 16S ribosomal RNA. This is Small ribosomal subunit protein uS17 from Rickettsia conorii (strain ATCC VR-613 / Malish 7).